The chain runs to 409 residues: MAAEMALVKPISKFSSPKLSNPSKFLSGRRFSTVIRMSASSSPPPPTTATSKSKKGTKKEIQESLLTPRFYTTDFEEMEQLFNTEINKNLNEAEFEALLQEFKTDYNQTHFVRNKEFKEAADKLQGPLRQIFVEFLERSCTAEFSGFLLYKELGRRLKKTNPVVAEIFSLMSRDEARHAGFLNKGLSDFNLALDLGFLTKARKYTFFKPKFIFYATYLSEKIGYWRYITIYRHLKENPEFQCYPIFKYFENWCQDENRHGDFFSALMKAQPQFLNDWQAKLWSRFFCLSVYVTMYLNDCQRTNFYEGIGLNTKEFDMHVIIETNRTTARIFPAVLDVENPEFKRKLDRMVVSYEKLLAIGETDDASFIKTLKRIPLVTSLASEILAAYLMPPVESGSVDFAEFEPNLVY.

2 disordered regions span residues M1–S23 and R36–E60. The N-terminal 36 residues, M1–R36, are a transit peptide targeting the chloroplast. Residues K13–S23 are compositionally biased toward polar residues.

This sequence belongs to the AcsF family. Part of the FLU-containing chloroplast membrane complex composed of FLU, CRD1, PORB, PORC, CHLP and HEMA1. Interacts with YCF54 in chloroplasts. Fe cation serves as cofactor.

The protein localises to the plastid. The protein resides in the chloroplast inner membrane. It is found in the chloroplast thylakoid membrane. The catalysed reaction is Mg-protoporphyrin IX 13-monomethyl ester + 3 NADPH + 3 O2 + 2 H(+) = 3,8-divinyl protochlorophyllide a + 3 NADP(+) + 5 H2O. It participates in porphyrin-containing compound metabolism; chlorophyll biosynthesis. Its function is as follows. Catalytic component of the MgProto monomethylester (MgProtoME) cyclase complex that catalyzes the formation of the isocyclic ring in chlorophyll biosynthesis. Mediates the cyclase reaction, which results in the formation of divinylprotochlorophyllide (Pchlide) characteristic of all chlorophylls from magnesium-protoporphyrin IX 13-monomethyl ester (MgPMME). This chain is Magnesium-protoporphyrin IX monomethyl ester [oxidative] cyclase, chloroplastic, found in Arabidopsis thaliana (Mouse-ear cress).